The primary structure comprises 318 residues: Trans-prenyltransferase (318 aa).

Residues 1–21 (MLHLIYISIIVVLIIILISYT) traverse the membrane as a helical segment. Residues Lys85, Arg88, and His122 each coordinate isopentenyl diphosphate. Positions 129 and 135 each coordinate Mg(2+). Arg140 provides a ligand contact to dimethylallyl diphosphate. Isopentenyl diphosphate is bound at residue Arg141. Dimethylallyl diphosphate-binding residues include Lys216, Thr217, and Gln254.

Belongs to the FPP/GGPP synthase family. Asfivirus trans-prenyltransferase subfamily. Requires Mg(2+) as cofactor.

The protein resides in the host endoplasmic reticulum. It localises to the host membrane. It catalyses the reaction isopentenyl diphosphate + dimethylallyl diphosphate = (2E)-geranyl diphosphate + diphosphate. The catalysed reaction is isopentenyl diphosphate + (2E)-geranyl diphosphate = (2E,6E)-farnesyl diphosphate + diphosphate. The enzyme catalyses isopentenyl diphosphate + (2E,6E)-farnesyl diphosphate = (2E,6E,10E)-geranylgeranyl diphosphate + diphosphate. It carries out the reaction isopentenyl diphosphate + (2E,6E,10E)-geranylgeranyl diphosphate = (2E,6E,10E,14E)-geranylfarnesyl diphosphate + diphosphate. Its pathway is isoprenoid biosynthesis; farnesyl diphosphate biosynthesis; farnesyl diphosphate from geranyl diphosphate and isopentenyl diphosphate: step 1/1. The protein operates within isoprenoid biosynthesis; geranyl diphosphate biosynthesis; geranyl diphosphate from dimethylallyl diphosphate and isopentenyl diphosphate: step 1/1. It functions in the pathway isoprenoid biosynthesis; geranylgeranyl diphosphate biosynthesis; geranylgeranyl diphosphate from farnesyl diphosphate and isopentenyl diphosphate: step 1/1. Trans-prenyltransferase that catalyzes the sequential condensation of isopentenyl diphosphate (IPP) with different allylic diphosphates, such as dimethylallyl diphosphate (DMAPP), geranyl diphosphate (GPP), farnesyl diphosphate (FPP) and geranylgeranyl diphosphate (GGPP), farnesyl diphosphate being the best allylic substrate. The sequence is that of Trans-prenyltransferase from African swine fever virus (isolate Tick/Malawi/Lil 20-1/1983) (ASFV).